The sequence spans 530 residues: UDP-glucuronosyltransferase 2B17 (530 aa).

The signal sequence occupies residues 1 to 23; it reads MPGKWISALLLLQISCCFRSVKC. 2 N-linked (GlcNAc...) asparagine glycosylation sites follow: N316 and N483. Residues 494–510 traverse the membrane as a helical segment; it reads VIGFLLSCVATTIVLSV.

This sequence belongs to the UDP-glycosyltransferase family.

The protein localises to the endoplasmic reticulum membrane. It carries out the reaction glucuronate acceptor + UDP-alpha-D-glucuronate = acceptor beta-D-glucuronoside + UDP + H(+). It catalyses the reaction 17alpha-estradiol + UDP-alpha-D-glucuronate = 17alpha-estradiol 3-O-(beta-D-glucuronate) + UDP + H(+). The enzyme catalyses 17alpha-estradiol + UDP-alpha-D-glucuronate = 17alpha-estradiol 17-O-(beta-D-glucuronate) + UDP + H(+). The catalysed reaction is 17beta-estradiol + UDP-alpha-D-glucuronate = 17beta-estradiol 17-O-(beta-D-glucuronate) + UDP + H(+). It carries out the reaction 17beta-hydroxy-5alpha-androstan-3-one + UDP-alpha-D-glucuronate = 5alpha-dihydrotestosterone 17-O-(beta-D-glucuronate) + UDP + H(+). It catalyses the reaction testosterone + UDP-alpha-D-glucuronate = testosterone 17-O-(beta-D-glucuronate) + UDP + H(+). Functionally, UDP-glucuronosyltransferase (UGT) that catalyzes phase II biotransformation reactions in which lipophilic substrates are conjugated with glucuronic acid to increase the metabolite's water solubility, thereby facilitating excretion into either the urine or bile. Catalyzes the glucuronidation of endogenous steroid hormones such as androgens (epitestosterone, androsterone) and estrogens (estradiol, epiestradiol). The polypeptide is UDP-glucuronosyltransferase 2B17 (Mus musculus (Mouse)).